Reading from the N-terminus, the 461-residue chain is Mitochondrial distribution and morphology protein 12 (461 aa).

One can recognise an SMP-LTD domain in the interval 1–454; it reads MSLDLDWNLL…YPNYYTIDLP (454 aa). Disordered regions lie at residues 75-104 and 226-301; these read RRRGARQTTPASNATTLVESPTDSFGVHHG and DASS…PSSA. Composition is skewed to polar residues over residues 80–97 and 272–288; these read RQTTPASNATTLVESPTD and RATSAPSFRSISGQNSP.

Belongs to the MDM12 family. Component of the ER-mitochondria encounter structure (ERMES) or MDM complex, composed of MMM1, MDM10, MDM12 and MDM34. An MMM1 homodimer associates with one molecule of MDM12 on each side in a pairwise head-to-tail manner, and the SMP-LTD domains of MMM1 and MDM12 generate a continuous hydrophobic tunnel for phospholipid trafficking.

It localises to the mitochondrion outer membrane. The protein resides in the endoplasmic reticulum membrane. In terms of biological role, component of the ERMES/MDM complex, which serves as a molecular tether to connect the endoplasmic reticulum (ER) and mitochondria. Components of this complex are involved in the control of mitochondrial shape and protein biogenesis, and function in nonvesicular lipid trafficking between the ER and mitochondria. MDM12 is required for the interaction of the ER-resident membrane protein MMM1 and the outer mitochondrial membrane-resident beta-barrel protein MDM10. The MDM12-MMM1 subcomplex functions in the major beta-barrel assembly pathway that is responsible for biogenesis of all mitochondrial outer membrane beta-barrel proteins, and acts in a late step after the SAM complex. The MDM10-MDM12-MMM1 subcomplex further acts in the TOM40-specific pathway after the action of the MDM12-MMM1 complex. Essential for establishing and maintaining the structure of mitochondria and maintenance of mtDNA nucleoids. The chain is Mitochondrial distribution and morphology protein 12 from Mycosarcoma maydis (Corn smut fungus).